Consider the following 598-residue polypeptide: MFS siderochrome iron transporter D (598 aa).

The interval methionine 1–proline 34 is disordered. Residues methionine 1–lysine 76 lie on the Cytoplasmic side of the membrane. The helical transmembrane segment at isoleucine 77–alanine 97 threads the bilayer. At serine 98–serine 115 the chain is on the extracellular side. Asparagine 102 carries N-linked (GlcNAc...) asparagine glycosylation. The chain crosses the membrane as a helical span at residues leucine 116–alanine 136. Over lysine 137 to arginine 144 the chain is Cytoplasmic. The chain crosses the membrane as a helical span at residues serine 145–cysteine 165. At histidine 166 to tyrosine 171 the chain is on the extracellular side. Residues cysteine 172 to isoleucine 192 form a helical membrane-spanning segment. Over threonine 193–glycine 203 the chain is Cytoplasmic. The helical transmembrane segment at leucine 204 to alanine 224 threads the bilayer. The Extracellular segment spans residues glutamate 225–arginine 233. The helical transmembrane segment at tryptophan 234–leucine 254 threads the bilayer. Over arginine 255–aspartate 289 the chain is Cytoplasmic. The helical transmembrane segment at isoleucine 290–alanine 310 threads the bilayer. Residues glycine 311–lysine 318 are Extracellular-facing. Residues serine 319–valine 339 form a helical membrane-spanning segment. Residues glutamate 340 to arginine 341 lie on the Cytoplasmic side of the membrane. The chain crosses the membrane as a helical span at residues phenylalanine 342–alanine 362. The Extracellular segment spans residues cysteine 363 to glycine 396. A helical transmembrane segment spans residues tyrosine 397–isoleucine 417. At lysine 418 to arginine 424 the chain is on the cytoplasmic side. The chain crosses the membrane as a helical span at residues tryptophan 425–arginine 445. The Extracellular portion of the chain corresponds to lysine 446–serine 450. The chain crosses the membrane as a helical span at residues valine 451 to cysteine 471. The Cytoplasmic portion of the chain corresponds to glutamine 472–alanine 490. A helical transmembrane segment spans residues phenylalanine 491–tryptophan 511. The Extracellular portion of the chain corresponds to threonine 512–glutamine 562. Residues serine 563–isoleucine 583 form a helical membrane-spanning segment. The Cytoplasmic segment spans residues arginine 584 to phenylalanine 598.

This sequence belongs to the major facilitator superfamily.

It localises to the cell membrane. Its function is as follows. Major facilitator transporter involved in fusarinine C (FsC) uptake. In contrast to TAFC-mediated iron uptake, FsC-mediated iron uptake via mirD does not play a significant role during infection. This Aspergillus fumigatus (strain ATCC MYA-4609 / CBS 101355 / FGSC A1100 / Af293) (Neosartorya fumigata) protein is MFS siderochrome iron transporter D.